The following is a 134-amino-acid chain: Small ribosomal subunit protein bS16 (134 aa).

A disordered region spans residues 80–134; sequence GLAKRPTRSNPTKGEPGKKAQERLAMAKQAEEEAAAKAAEAAAAAAAPAEEAASE. Over residues 115-134 the composition is skewed to low complexity; sequence AKAAEAAAAAAAPAEEAASE.

The protein belongs to the bacterial ribosomal protein bS16 family.

The sequence is that of Small ribosomal subunit protein bS16 from Brucella anthropi (strain ATCC 49188 / DSM 6882 / CCUG 24695 / JCM 21032 / LMG 3331 / NBRC 15819 / NCTC 12168 / Alc 37) (Ochrobactrum anthropi).